Here is a 202-residue protein sequence, read N- to C-terminus: Probable nicotinate-nucleotide adenylyltransferase (202 aa).

It belongs to the NadD family.

The enzyme catalyses nicotinate beta-D-ribonucleotide + ATP + H(+) = deamido-NAD(+) + diphosphate. The protein operates within cofactor biosynthesis; NAD(+) biosynthesis; deamido-NAD(+) from nicotinate D-ribonucleotide: step 1/1. Functionally, catalyzes the reversible adenylation of nicotinate mononucleotide (NaMN) to nicotinic acid adenine dinucleotide (NaAD). The protein is Probable nicotinate-nucleotide adenylyltransferase of Clostridium perfringens (strain SM101 / Type A).